The chain runs to 238 residues: Aspirochlorine biosynthesis protein N (238 aa).

This sequence belongs to the asaB hydroxylase/desaturase family.

The protein operates within mycotoxin biosynthesis. In terms of biological role, part of the gene cluster that mediates the biosynthesis of aspirochlorine (or antibiotic A30641), an unusual halogenated spiro compound with distinctive antifungal properties due to selective inhibition of protein biosynthesis, and which is also active against bacteria, viruses, and murine tumor cells. The non-ribosomal peptide synthetase (NRPS) aclP is responsible the formation of the diketopiperazine (DKP) core from the condensation of 2 phenylalanine residues. One Phe residue is tailored into chlorotyrosine by hydroxylation and chlorination, whereas the second Phe undergoes an unprecedented C-C bond cleavage to be converted into glycine. After formation of the DKP, sulfur is incorporated into the DKP by conjugation with glutathione by aclG, followed by its stepwise degradation to the thiol by aclI, aclJ and aclK, and the dithiol oxidation by aclT. In addition, oxygenases (aclB, aclC, aclL and aclO) and O-methyltransferases (aclM and aclU) act as tailoring enzymes to produce the intermediate dechloroaspirochlorine. Ultimately, chlorination of dechloroaspirochlorine by the halogenase aclH is the last step in the aspirochlorine pathway. This chain is Aspirochlorine biosynthesis protein N, found in Aspergillus oryzae (strain ATCC 42149 / RIB 40) (Yellow koji mold).